We begin with the raw amino-acid sequence, 237 residues long: Phosphoribosylaminoimidazole-succinocarboxamide synthase (237 aa).

The protein belongs to the SAICAR synthetase family.

It catalyses the reaction 5-amino-1-(5-phospho-D-ribosyl)imidazole-4-carboxylate + L-aspartate + ATP = (2S)-2-[5-amino-1-(5-phospho-beta-D-ribosyl)imidazole-4-carboxamido]succinate + ADP + phosphate + 2 H(+). The protein operates within purine metabolism; IMP biosynthesis via de novo pathway; 5-amino-1-(5-phospho-D-ribosyl)imidazole-4-carboxamide from 5-amino-1-(5-phospho-D-ribosyl)imidazole-4-carboxylate: step 1/2. This Psychrobacter cryohalolentis (strain ATCC BAA-1226 / DSM 17306 / VKM B-2378 / K5) protein is Phosphoribosylaminoimidazole-succinocarboxamide synthase.